Consider the following 1352-residue polypeptide: MSKVTAPGSGPPAAASGKEKRSFSKRLFRSGRAGGGGAGGPGASGPAAPSSPSSPSSARSVGSFMSRVLKTLSTLSHLSSEGAAPDRGGLRSCFPPGPAAAPTPPPCPPPPASPAPPACAAEPVPGVAGLRNHGNTCFMNATLQCLSNTELFAEYLALGQYRAGRPEPSPDPEQPAGRGAQGQGEVTEQLAHLVRALWTLEYTPQHSRDFKTIVSKNALQYRGNSQHDAQEFLLWLLDRVHEDLNHSVKQSGQPPLKPPSETDMMPEGPSFPVCSTFVQELFQAQYRSSLTCPHCQKQSNTFDPFLCISLPIPLPHTRPLYVTVVYQGKCSHCMRIGVAVPLSGTVARLREAVSMETKIPTDQIVLTEMYYDGFHRSFCDTDDLETVHESDCIFAFETPEIFRPEGILSQRGIHLNNNLNHLKFGLDYHRLSSPTQTAAKQGKMDSPTSRAGSDKIVLLVCNRACTGQQGKRFGLPFVLHLEKTIAWDLLQKEILEKMKYFLRPTVCIQVCPFSLRVVSVVGITYLLPQEEQPLCHPIVERALKSCGPGGTAHVKLVVEWDKETRDFLFVNTEDEYIPDAESVRLQRERHHQPQTCTLSQCFQLYTKEERLAPDDAWRCPHCKQLQQGSITLSLWTLPDVLIIHLKRFRQEGDRRMKLQNMVKFPLTGLDMTPHVVKRSQSSWSLPSHWSPWRRPYGLGRDPEDYIYDLYAVCNHHGTMQGGHYTAYCKNSVDGLWYCFDDSDVQQLSEDEVCTQTAYILFYQRRTAIPSWSANSSVAGSTSSSLCEHWVSRLPGSKPASVTSAASSRRTSLASLSESVEMTGERSEDDGGFSTRPFVRSVQRQSLSSRSSVTSPLAVNENCMRPSWSLSAKLQMRSNSPSRFSGDSPIHSSASTLEKIGEAADDKVSISCFGSLRNLSSSYQEPSDSHSRREHKAVGRAPLAVMEGVFKDESDTRRLNSSVVDTQSKHSAQGDRLPPLSGPFDNNNQIAYVDQSDSVDSSPVKEVKAPSHPGSLAKKPESTTKRSPSSKGTSEPEKSLRKGRPALASQESSLSSTSPSSPLPVKVSLKPSRSRSKADSSSRGSGRHSSPAPAQPKKESSPKSQDSVSSPSPQKQKSASALTYTASSTSAKKASGPATRSPFPPGKSRTSDHSLSREGSRQSLGSDRASATSTSKPNSPRVSQARAGEGRGAGKHVRSSSMASLRSPSTSIKSGLKRDSKSEDKGLSFFKSALRQKETRRSTDLGKTALLSKKAGGSSVKSVCKNTGDDEAERGHQPPASQQPNANTTGKEQLVTKDPASAKHSLLSARKSKSSQLDSGVPSSPGGRQSAEKSSKKLSSSMQTSARPSQKPQ.

Low complexity predominate over residues 1 to 16 (MSKVTAPGSGPPAAAS). Disordered regions lie at residues 1–62 (MSKV…RSVG) and 79–119 (SSEG…PPAC). Residues 32–43 (RAGGGGAGGPGA) show a composition bias toward gly residues. Low complexity predominate over residues 44–62 (SGPAAPSSPSSPSSARSVG). The segment covering 95 to 117 (PPGPAAAPTPPPCPPPPASPAPP) has biased composition (pro residues). The 638-residue stretch at 128–765 (AGLRNHGNTC…TAYILFYQRR (638 aa)) folds into the USP domain. Cys137 serves as the catalytic Nucleophile. The segment at 162–185 (RAGRPEPSPDPEQPAGRGAQGQGE) is disordered. Catalysis depends on His723, which acts as the Proton acceptor. Disordered regions lie at residues 812-835 (LASLSESVEMTGERSEDDGGFSTR), 919-939 (SSSYQEPSDSHSRREHKAVGR), and 951-1352 (DESD…QKPQ). The segment covering 958-970 (LNSSVVDTQSKHS) has biased composition (polar residues). Low complexity-rich tracts occupy residues 992 to 1001 (VDQSDSVDSS), 1051 to 1070 (SSLSSTSPSSPLPVKVSLKP), 1078 to 1089 (DSSSRGSGRHSS), and 1101 to 1138 (PKSQDSVSSPSPQKQKSASALTYTASSTSAKKASGPAT). A compositionally biased stretch (basic and acidic residues) spans 1148–1159 (RTSDHSLSREGS). Positions 1160 to 1181 (RQSLGSDRASATSTSKPNSPRV) are enriched in polar residues. Low complexity predominate over residues 1198–1210 (SSSMASLRSPSTS). Composition is skewed to basic and acidic residues over residues 1215–1225 (LKRDSKSEDKG) and 1234–1243 (RQKETRRSTD). Residues 1251–1264 (SKKAGGSSVKSVCK) show a composition bias toward low complexity. Lys1264 carries the N6-acetyllysine modification. Polar residues-rich tracts occupy residues 1278-1290 (PASQQPNANTTGK) and 1341-1352 (MQTSARPSQKPQ).

The protein belongs to the peptidase C19 family. In terms of processing, acetylated at Lys-1264. Acetylation decreases activity. Deacetylated by SIRT1. As to expression, widely expressed.

The enzyme catalyses Thiol-dependent hydrolysis of ester, thioester, amide, peptide and isopeptide bonds formed by the C-terminal Gly of ubiquitin (a 76-residue protein attached to proteins as an intracellular targeting signal).. Functionally, deubiquitinase that recognizes and hydrolyzes the peptide bond at the C-terminal Gly of ubiquitin. May play a role in the regulation of NF-kappa-B signaling pathway by deubiquitinating TRAF2. In terms of biological role, (Microbial infection) Plays a positive role in foot-and-mouth disease and classical swine fever viral infection. Mechanistically, associates with internal ribosomal entry site (IRES) element within the 5'-untranslated region of viral genomes to promote translation of the virus-encoded polyprotein. This chain is Ubiquitin carboxyl-terminal hydrolase 31 (USP31), found in Homo sapiens (Human).